The sequence spans 478 residues: Hexokinase (478 aa).

The region spanning 21–465 (EYLLKELTEL…LGAGAAIIAA (445 aa)) is the Hexokinase domain. The interval 75–208 (TGKEMGDYLA…KVPIEVVALI (134 aa)) is hexokinase small subdomain. Position 111 (K111) interacts with ATP. The tract at residues 151-177 (PLGFTFSYPASQGSINEGYLQRWTKGF) is glucose-binding. Residues 209 to 454 (NDTTGTLVAS…DPIVIVPAED (246 aa)) form a hexokinase large subdomain region.

This sequence belongs to the hexokinase family. Monomer.

The enzyme catalyses a D-hexose + ATP = a D-hexose 6-phosphate + ADP + H(+). It carries out the reaction D-fructose + ATP = D-fructose 6-phosphate + ADP + H(+). The catalysed reaction is D-glucose + ATP = D-glucose 6-phosphate + ADP + H(+). The protein operates within carbohydrate metabolism; hexose metabolism. It participates in carbohydrate degradation; glycolysis; D-glyceraldehyde 3-phosphate and glycerone phosphate from D-glucose: step 1/4. In terms of biological role, catalyzes the phosphorylation of hexose, such as D-glucose and D-fructose, to hexose 6-phosphate (D-glucose 6-phosphate and D-fructose 6-phosphate, respectively). Mediates the initial step of glycolysis by catalyzing phosphorylation of D-glucose to D-glucose 6-phosphate. This chain is Hexokinase (HXK), found in Schwanniomyces occidentalis (Yeast).